The following is a 344-amino-acid chain: 4'-phosphopantetheinyl transferase NpgA (344 aa).

It belongs to the P-Pant transferase superfamily.

It catalyses the reaction apo-[ACP] + CoA = holo-[ACP] + adenosine 3',5'-bisphosphate + H(+). Its function is as follows. Transfers the 4'-phosphopantetheine moiety from coenzyme A to a Ser of an acyl-carrier-protein. The enzyme is able to transfer the cofactor to a broad range of enzymes with acyl- or peptidyl-carrier protein domains. Required for primary biological processes such as growth and asexual/sexual development, and activates target enzymes involved in the synthesis of metabolites such as fatty acids, polyketides and nonribosomal peptides, lysine, siderophore, penicillin, sterigmatocystin, shamixantone, dehydroaustinol, and pigments. In Emericella nidulans (strain FGSC A4 / ATCC 38163 / CBS 112.46 / NRRL 194 / M139) (Aspergillus nidulans), this protein is 4'-phosphopantetheinyl transferase NpgA (npgA).